The chain runs to 245 residues: Ubiquinone/menaquinone biosynthesis C-methyltransferase UbiE (245 aa).

S-adenosyl-L-methionine contacts are provided by residues Thr71, Asp92, and Asp118–Ala119.

This sequence belongs to the class I-like SAM-binding methyltransferase superfamily. MenG/UbiE family.

It catalyses the reaction a 2-demethylmenaquinol + S-adenosyl-L-methionine = a menaquinol + S-adenosyl-L-homocysteine + H(+). It carries out the reaction a 2-methoxy-6-(all-trans-polyprenyl)benzene-1,4-diol + S-adenosyl-L-methionine = a 5-methoxy-2-methyl-3-(all-trans-polyprenyl)benzene-1,4-diol + S-adenosyl-L-homocysteine + H(+). It participates in quinol/quinone metabolism; menaquinone biosynthesis; menaquinol from 1,4-dihydroxy-2-naphthoate: step 2/2. The protein operates within cofactor biosynthesis; ubiquinone biosynthesis. Its function is as follows. Methyltransferase required for the conversion of demethylmenaquinol (DMKH2) to menaquinol (MKH2) and the conversion of 2-polyprenyl-6-methoxy-1,4-benzoquinol (DDMQH2) to 2-polyprenyl-3-methyl-6-methoxy-1,4-benzoquinol (DMQH2). This chain is Ubiquinone/menaquinone biosynthesis C-methyltransferase UbiE, found in Neisseria meningitidis serogroup B (strain ATCC BAA-335 / MC58).